Consider the following 234-residue polypeptide: Sugar fermentation stimulation protein A (234 aa).

The H-T-H motif DNA-binding region spans Leu-201–Ser-220.

The protein belongs to the SfsA family.

Binds to DNA non-specifically. Could be a regulatory factor involved in maltose metabolism. This chain is Sugar fermentation stimulation protein A, found in Escherichia coli O7:K1 (strain IAI39 / ExPEC).